Consider the following 371-residue polypeptide: Phospholipid-transporting ATPase accessory subunit ivn1 (371 aa).

The Cytoplasmic segment spans residues 1–39 (MSQTEIVKKPKHKRFKRPDKSRFVQQTLPAWQFIFTPWT). The helical transmembrane segment at 40–60 (VLPLLFLLGIVFAPLGAGMFV) threads the bilayer. Over 61–325 (ASRRVKELRI…STTSVIGGKN (265 aa)) the chain is Extracellular. 2 disulfides stabilise this stretch: cysteine 75/cysteine 111 and cysteine 166/cysteine 181. N-linked (GlcNAc...) asparagine glycosylation is present at asparagine 99. Residues asparagine 190, asparagine 212, asparagine 216, asparagine 233, asparagine 284, and asparagine 297 are each glycosylated (N-linked (GlcNAc...) asparagine). The helical transmembrane segment at 326 to 346 (YFLGILYFVIGGLCAASGVIL) threads the bilayer. At 347–371 (SIACLIKPRRVGDPRYLSWNRGKSS) the chain is on the cytoplasmic side.

It belongs to the CDC50/LEM3 family.

The protein resides in the endoplasmic reticulum membrane. Accessory component of a P4-ATPase flippase complex which catalyzes the hydrolysis of ATP coupled to the transport of aminophospholipids from the lumenal to the cytosolic leaflet of membranes and ensures the maintenance of asymmetric distribution of phospholipids. In Schizosaccharomyces pombe (strain 972 / ATCC 24843) (Fission yeast), this protein is Phospholipid-transporting ATPase accessory subunit ivn1 (ivn1).